Reading from the N-terminus, the 240-residue chain is Probable transcriptional regulatory protein Csal_0810 (240 aa).

Belongs to the TACO1 family.

The protein localises to the cytoplasm. This chain is Probable transcriptional regulatory protein Csal_0810, found in Chromohalobacter salexigens (strain ATCC BAA-138 / DSM 3043 / CIP 106854 / NCIMB 13768 / 1H11).